The chain runs to 374 residues: Carboxypeptidase O (374 aa).

An N-terminal signal peptide occupies residues 1–20 (MKPLLETLYLLGMLVPGGLG). A Peptidase M14 domain is found at 49–344 (IYHPMGEIYE…EAVLSVLDDV (296 aa)). 2 residues coordinate Zn(2+): His108 and Glu111. N-linked (GlcNAc...) asparagine glycans are attached at residues Asn132, Asn174, and Asn187. Zn(2+) is bound at residue His236. Residue Asn251 is glycosylated (N-linked (GlcNAc...) asparagine). The active-site Proton donor/acceptor is Glu310. Asp352 is lipidated: GPI-anchor amidated aspartate. Positions 353–374 (SAGRVTSATMLLGLLVSCMSLL) are cleaved as a propeptide — removed in mature form.

The protein belongs to the peptidase M14 family. Requires Zn(2+) as cofactor. Post-translationally, N-glycosylated. As to expression, detected in enterocytes of the ileum.

The protein resides in the apical cell membrane. Strongly inhibited by potato carboxypeptidase inhibitor, and the chelating agents EDTA and 1,10-phenanthroline. Also inhibited by compounds with multiple carboxylic acid groups such as citrate and succinate, and to a lesser exent the amino acids aspartate and glutamate. Not significantly inhibited by benzylsuccinic acid. Carboxypeptidase which preferentially cleaves C-terminal acidic residues from peptides and proteins. Can also cleave C-terminal hydrophobic amino acids, with a preference for small residues over large residues. The protein is Carboxypeptidase O of Homo sapiens (Human).